Reading from the N-terminus, the 386-residue chain is L-arabinitol 4-dehydrogenase (386 aa).

Zn(2+) contacts are provided by Cys-55, His-80, Glu-81, Cys-110, Cys-113, Cys-116, Cys-124, and Glu-165. NAD(+) contacts are provided by residues 192–193, Asp-213, Arg-218, Ile-293, and 317–319; these read PI and QYR.

The protein belongs to the zinc-containing alcohol dehydrogenase family. In terms of assembly, homotetramer. Requires Zn(2+) as cofactor.

The catalysed reaction is L-arabinitol + NAD(+) = L-xylulose + NADH + H(+). Its pathway is carbohydrate degradation; L-arabinose degradation via L-arabinitol; D-xylulose 5-phosphate from L-arabinose (fungal route): step 2/5. Its function is as follows. Catalyzes the NAD-dependent oxidation of L-arabinitol to L-xylulose in the fungal L-arabinose catabolic pathway. L-arabinose catabolism is important for using plant material as a carbon source. Not active with NADP as cosubstrate. This chain is L-arabinitol 4-dehydrogenase (ladA), found in Aspergillus niger (strain ATCC MYA-4892 / CBS 513.88 / FGSC A1513).